A 136-amino-acid chain; its full sequence is Large ribosomal subunit protein uL16 (136 aa).

This sequence belongs to the universal ribosomal protein uL16 family. Part of the 50S ribosomal subunit.

Functionally, binds 23S rRNA and is also seen to make contacts with the A and possibly P site tRNAs. This chain is Large ribosomal subunit protein uL16, found in Aggregatibacter actinomycetemcomitans (Actinobacillus actinomycetemcomitans).